The chain runs to 282 residues: NADPH-dependent 7-cyano-7-deazaguanine reductase (282 aa).

88–90 (IES) contributes to the substrate binding site. 90–91 (SK) serves as a coordination point for NADPH. Cys190 (thioimide intermediate) is an active-site residue. The Proton donor role is filled by Asp197. Residue 229 to 230 (HE) coordinates substrate. 258–259 (RG) contacts NADPH.

This sequence belongs to the GTP cyclohydrolase I family. QueF type 2 subfamily. As to quaternary structure, homodimer.

It localises to the cytoplasm. The catalysed reaction is 7-aminomethyl-7-carbaguanine + 2 NADP(+) = 7-cyano-7-deazaguanine + 2 NADPH + 3 H(+). It functions in the pathway tRNA modification; tRNA-queuosine biosynthesis. Functionally, catalyzes the NADPH-dependent reduction of 7-cyano-7-deazaguanine (preQ0) to 7-aminomethyl-7-deazaguanine (preQ1). The sequence is that of NADPH-dependent 7-cyano-7-deazaguanine reductase from Pectobacterium carotovorum subsp. carotovorum (strain PC1).